The following is a 438-amino-acid chain: MGSSAGSWRRLEDSEREETDSEPQAPRLDSRSVLWKNAVGFWILGLCNNFSYVVMLSAAHDILKQEQASGNQSHVEPGPTPTPHNSSSRFDCNSISTAAVLLADILPTLVIKLLAPLGLHLLPYSPRVLVSGVCSAGSFVLVAFSQSVGLSLCGVVLASISSGLGEVTFLSLTAFYPSAVISWWSSGTGGAGLLGSLSYLGLTQAGLSPQHTLLSMLGIPVLLLASYFLLLTSPEPLDPGGENEAETAARQPLIGTETPESKPGASWDLSLQERWTVFKGLLWYIIPLVLVYFAEYFINQGLFELLFFRNTSLSHAQQYRWYQMLYQAGVFASRSSLQCCRIRFTWVLALLQCLNLALLLADVCLNFLPSIYLIFIIILYEGLLGGAAYVNTFHNIALETSDKHREFAMEAACISDTLGISLSGVLALPLHDFLCHLP.

The segment at 1–27 (MGSSAGSWRRLEDSEREETDSEPQAPR) is disordered. Over 1-37 (MGSSAGSWRRLEDSEREETDSEPQAPRLDSRSVLWKN) the chain is Cytoplasmic. Position 14 is a phosphoserine (S14). The helical transmembrane segment at 38–58 (AVGFWILGLCNNFSYVVMLSA) threads the bilayer. Over 59–127 (AHDILKQEQA…GLHLLPYSPR (69 aa)) the chain is Lumenal. The disordered stretch occupies residues 67–87 (QASGNQSHVEPGPTPTPHNSS). N71 and N85 each carry an N-linked (GlcNAc...) asparagine glycan. A helical transmembrane segment spans residues 128-148 (VLVSGVCSAGSFVLVAFSQSV). Residues 149 to 151 (GLS) lie on the Cytoplasmic side of the membrane. Residues 152 to 172 (LCGVVLASISSGLGEVTFLSL) traverse the membrane as a helical segment. Residues 173–182 (TAFYPSAVIS) are Lumenal-facing. The helical transmembrane segment at 183–203 (WWSSGTGGAGLLGSLSYLGLT) threads the bilayer. The Cytoplasmic segment spans residues 204-277 (QAGLSPQHTL…DLSLQERWTV (74 aa)). Positions 239–261 (PGGENEAETAARQPLIGTETPES) are disordered. The short motif at 242-244 (ENE) is the Lysosomal targeting motif element. The Lysosomal targeting motif. Required for AP1G1, AP2A2 and AP3D1 interaction motif lies at 253-254 (LI). Residues 278–298 (FKGLLWYIIPLVLVYFAEYFI) traverse the membrane as a helical segment. Residues 299–346 (NQGLFELLFFRNTSLSHAQQYRWYQMLYQAGVFASRSSLQCCRIRFTW) are Lumenal-facing. N-linked (GlcNAc...) asparagine glycosylation is present at N310. Residues 347–367 (VLALLQCLNLALLLADVCLNF) traverse the membrane as a helical segment. Over 368-438 (LPSIYLIFII…PLHDFLCHLP (71 aa)) the chain is Cytoplasmic. The Lysosomal targeting motif signature appears at 409 to 419 (MEAACISDTLG). The residue at position 435 (C435) is a Cysteine methyl ester. C435 carries the S-farnesyl cysteine lipid modification. Residues 436 to 438 (HLP) constitute a propeptide, removed in mature form.

Belongs to the battenin family. As to quaternary structure, homooligomer. Interacts with DCTN1, KIF3A, RAB7A and RILP. Interacts with CLN5. Interacts with KCNIP3. Highly glycosylated. In terms of processing, farnesylation is important for trafficking to lysosomes. Expressed throughout the brain, such as, in the cerebral cortex, hippocampus, cerebellum and several different cerebral nuclei (at protein level). In the cerebral cortex, expressed in all cortical layers. In the hippocampus, expressed in the granule cells in the dentate gyrus and the pyramidal cells of the hippocampus proper. In the cerebellum expressed in the granular and molecular layers, and in the Purkinje cell layer.

It localises to the lysosome membrane. Its subcellular location is the late endosome. It is found in the lysosome. The protein localises to the membrane raft. The protein resides in the golgi apparatus. It localises to the trans-Golgi network. Its subcellular location is the synapse. It is found in the synaptosome. The protein localises to the early endosome membrane. The protein resides in the late endosome membrane. It localises to the cytoplasmic vesicle. Its subcellular location is the autophagosome. In terms of biological role, mediates microtubule-dependent, anterograde transport connecting the Golgi network, endosomes, autophagosomes, lysosomes and plasma membrane, and participates in several cellular processes such as regulation of lysosomal pH, lysosome protein degradation, receptor-mediated endocytosis, autophagy, transport of proteins and lipids from the TGN, apoptosis and synaptic transmission. Facilitates the proteins transport from trans-Golgi network (TGN)-to other membrane compartments such as transport of microdomain-associated proteins to the plasma membrane, IGF2R transport to the lysosome where it regulates the CTSD release leading to regulation of CTSD maturation and thereby APP intracellular processing. Moreover regulates CTSD activity in response to osmotic stress. Also binds galactosylceramide and transports it from the trans Golgi to the rafts, which may have immediate and downstream effects on cell survival by modulating ceramide synthesis. At the plasma membrane, regulates actin-dependent events including filopodia formation, cell migration, and pinocytosis through ARF1-CDC42 pathway and also the cytoskeleton organization through interaction with MYH10 and fodrin leading to the regulation of the plasma membrane association of Na+, K+ ATPase complex. Regulates synaptic transmission in the amygdala, hippocampus, and cerebellum through regulation of synaptic vesicles density and their proximity to active zones leading to modulation of short-term plasticity and age-dependent anxious behavior, learning and memory. Regulates autophagic vacuoles (AVs) maturation by modulating the trafficking between endocytic and autophagolysosomal/lysosomal compartments, which involves vesicle fusion leading to regulation of degradation process. Also participates in cellular homeostasis of compounds such as, water, ions, amino acids, proteins and lipids in several tissue namely in brain and kidney through regulation of their transport and synthesis. This chain is Battenin, found in Mus musculus (Mouse).